A 165-amino-acid polypeptide reads, in one-letter code: Crossover junction endodeoxyribonuclease RuvC (165 aa).

Active-site residues include Asp-7, Glu-67, and Asp-140. Positions 7, 67, and 140 each coordinate Mg(2+).

This sequence belongs to the RuvC family. Homodimer which binds Holliday junction (HJ) DNA. The HJ becomes 2-fold symmetrical on binding to RuvC with unstacked arms; it has a different conformation from HJ DNA in complex with RuvA. In the full resolvosome a probable DNA-RuvA(4)-RuvB(12)-RuvC(2) complex forms which resolves the HJ. The cofactor is Mg(2+).

The protein resides in the cytoplasm. The enzyme catalyses Endonucleolytic cleavage at a junction such as a reciprocal single-stranded crossover between two homologous DNA duplexes (Holliday junction).. The RuvA-RuvB-RuvC complex processes Holliday junction (HJ) DNA during genetic recombination and DNA repair. Endonuclease that resolves HJ intermediates. Cleaves cruciform DNA by making single-stranded nicks across the HJ at symmetrical positions within the homologous arms, yielding a 5'-phosphate and a 3'-hydroxyl group; requires a central core of homology in the junction. The consensus cleavage sequence is 5'-(A/T)TT(C/G)-3'. Cleavage occurs on the 3'-side of the TT dinucleotide at the point of strand exchange. HJ branch migration catalyzed by RuvA-RuvB allows RuvC to scan DNA until it finds its consensus sequence, where it cleaves and resolves the cruciform DNA. The protein is Crossover junction endodeoxyribonuclease RuvC of Halothermothrix orenii (strain H 168 / OCM 544 / DSM 9562).